The primary structure comprises 84 residues: Alpha-mammal toxin Aah3 (84 aa).

The N-terminal stretch at 1 to 19 (MNYLVMISLALLLMTGVES) is a signal peptide. An LCN-type CS-alpha/beta domain is found at 21-82 (RDGYIVDSKN…PIKDPSYKCH (62 aa)). Intrachain disulfides connect Cys31–Cys81, Cys35–Cys53, Cys39–Cys63, and Cys43–Cys65. Position 84 (Arg84) is a propeptide, removed by a carboxypeptidase.

The protein belongs to the long (4 C-C) scorpion toxin superfamily. Sodium channel inhibitor family. Alpha subfamily. As to expression, expressed by the venom gland.

It is found in the secreted. Alpha toxins bind voltage-independently at site-3 of sodium channels (Nav) and inhibit the inactivation of the activated channels, thereby blocking neuronal transmission. In Androctonus australis (Sahara scorpion), this protein is Alpha-mammal toxin Aah3.